The primary structure comprises 553 residues: 4-coumarate--CoA ligase (553 aa).

Residues serine 198, serine 199, glycine 200, threonine 201, threonine 202, and lysine 206 each contribute to the ATP site. The (E)-4-coumaroyl-AMP site is built by tyrosine 248 and serine 252. Position 269 (lysine 269) interacts with CoA. Residues 271 to 340 (EIVPFLELIQ…AKFPNAKLGQ (70 aa)) form an SBD1 region. Alanine 318, glutamine 340, glycine 341, threonine 345, and methionine 353 together coordinate (E)-4-coumaroyl-AMP. ATP contacts are provided by glutamine 340, glycine 341, and threonine 345. The SBD2 stretch occupies residues 341–408 (GYGMTEAGPV…IRGDQIMKGY (68 aa)). ATP contacts are provided by aspartate 429 and arginine 444. 2 residues coordinate (E)-4-coumaroyl-AMP: lysine 446 and lysine 450. 2 residues coordinate CoA: lysine 452 and glycine 453. ATP is bound at residue lysine 535.

Belongs to the ATP-dependent AMP-binding enzyme family. Mg(2+) serves as cofactor.

The catalysed reaction is (E)-4-coumarate + ATP + CoA = (E)-4-coumaroyl-CoA + AMP + diphosphate. It carries out the reaction (E)-4-coumarate + ATP + H(+) = (E)-4-coumaroyl-AMP + diphosphate. It catalyses the reaction (E)-4-coumaroyl-AMP + CoA = (E)-4-coumaroyl-CoA + AMP + H(+). Its pathway is phytoalexin biosynthesis; 3,4',5-trihydroxystilbene biosynthesis; 3,4',5-trihydroxystilbene from trans-4-coumarate: step 1/2. In terms of biological role, carboxylate--CoA ligase that may use 4-coumarate as substrate. Follows a two-step reaction mechanism, wherein the carboxylate substrate first undergoes adenylation by ATP, followed by a thioesterification in the presence of CoA to yield the final CoA thioester. The chain is 4-coumarate--CoA ligase from Vanilla planifolia (Vanilla).